The chain runs to 310 residues: MSRKKMGLLVMAYGTPYKEEDIERYYTHIRRGRKPEPEMLQDLKDRYEAIGGISPLAQITEQQAHNLEQHLNEIQDEITFKAYIGLKHIEPFIEDAVAEMHKDGITEAVSIVLAPHFSTFSVQSYNKRAKEEAEKLGGLTITSVESWYDEPKFVTYWVDRVKETYASMPEDERENAMLIVSAHSLPEKIKEFGDPYPDQLHESAKLIAEGAGVSEYAVGWQSEGNTPDPWLGPDVQDLTRDLFEQKGYQAFVYVPVGFVADHLEVLYDNDYECKVVTDDIGASYYRPEMPNAKPEFIDALATVVLKKLGR.

Y13 provides a ligand contact to Fe-coproporphyrin III. Y13 is a binding site for N-methylmesoporphyrin. Mg(2+) is bound at residue E20. A Fe-coproporphyrin III-binding site is contributed by R30. 31–33 serves as a coordination point for N-methylmesoporphyrin; sequence RGR. R46 lines the Mg(2+) pocket. Residues 46–47, S54, and Y125 each bind Fe-coproporphyrin III; that span reads RY. N-methylmesoporphyrin-binding residues include H183 and K188. A Fe(2+)-binding site is contributed by H183. E264 contributes to the Fe(2+) binding site. The Mg(2+) site is built by D268 and E272.

This sequence belongs to the ferrochelatase family. As to quaternary structure, monomer. Interacts with frataxin/Fra.

The protein localises to the cytoplasm. It catalyses the reaction Fe-coproporphyrin III + 2 H(+) = coproporphyrin III + Fe(2+). The protein operates within porphyrin-containing compound metabolism; protoheme biosynthesis. Stimulated by Mg(2+). Inhibited by Cd(2+). Inhibited by N-methylmesoporphyrin (N-MeMP) and 2,4-disulfonic acid deuteroporphyrin IX (dSDP). Functionally, involved in coproporphyrin-dependent heme b biosynthesis. Catalyzes the insertion of ferrous iron into coproporphyrin III to form Fe-coproporphyrin III. It can also insert iron into protoporphyrin IX. Has weaker activity with 2,4 disulfonate, deuteroporphyrin and 2,4 hydroxyethyl. In vitro, can also use Zn(2+) or Cu(2+). This is Coproporphyrin III ferrochelatase from Bacillus subtilis (strain 168).